Here is a 338-residue protein sequence, read N- to C-terminus: tRNA(Ile)-lysidine synthase (338 aa).

Ser-23 to Ser-28 contributes to the ATP binding site.

This sequence belongs to the tRNA(Ile)-lysidine synthase family.

The protein resides in the cytoplasm. It catalyses the reaction cytidine(34) in tRNA(Ile2) + L-lysine + ATP = lysidine(34) in tRNA(Ile2) + AMP + diphosphate + H(+). In terms of biological role, ligates lysine onto the cytidine present at position 34 of the AUA codon-specific tRNA(Ile) that contains the anticodon CAU, in an ATP-dependent manner. Cytidine is converted to lysidine, thus changing the amino acid specificity of the tRNA from methionine to isoleucine. This Helicobacter pylori (strain J99 / ATCC 700824) (Campylobacter pylori J99) protein is tRNA(Ile)-lysidine synthase.